Here is a 64-residue protein sequence, read N- to C-terminus: Large ribosomal subunit protein bL35 (64 aa).

The span at 1–10 (MPKMKTNSAA) shows a compositional bias: polar residues. Residues 1 to 64 (MPKMKTNSAA…SKNMKKLLGR (64 aa)) form a disordered region.

This sequence belongs to the bacterial ribosomal protein bL35 family.

This chain is Large ribosomal subunit protein bL35, found in Bifidobacterium adolescentis (strain ATCC 15703 / DSM 20083 / NCTC 11814 / E194a).